Reading from the N-terminus, the 117-residue chain is Small ribosomal subunit protein bS6 (117 aa).

Belongs to the bacterial ribosomal protein bS6 family.

In terms of biological role, binds together with bS18 to 16S ribosomal RNA. This Trichodesmium erythraeum (strain IMS101) protein is Small ribosomal subunit protein bS6.